A 226-amino-acid polypeptide reads, in one-letter code: Protein TRI1 (226 aa).

The 56-residue stretch at 1 to 56 (MADINKYIPMVDAILSVSNPDEISPKRVRKALQILYSVNLDSQRKLINELILERFG) folds into the DEK-C domain. Residues 83–118 (QKEEERPLRSTRKRKGKSESKSKRKKKKNDSPDSNS) are disordered. The segment covering 91 to 110 (RSTRKRKGKSESKSKRKKKK) has biased composition (basic residues). Ser-113 bears the Phosphoserine mark. Residues 119–195 (ISVRKVLLSA…NKLLTKHLFN (77 aa)) enclose the SWIB/MDM2 domain. A compositionally biased stretch (basic and acidic residues) spans 200 to 218 (VKHEEEQKQTPEKEIKLEN). The tract at residues 200-226 (VKHEEEQKQTPEKEIKLENESLPNLSG) is disordered. Glycyl lysine isopeptide (Lys-Gly) (interchain with G-Cter in SUMO) cross-links involve residues Lys-201 and Lys-215. At Ser-225 the chain carries Phosphoserine.

The protein localises to the cytoplasm. It is found in the nucleus. Its subcellular location is the nucleolus. May be involved in transcription regulation. The chain is Protein TRI1 (TRI1) from Saccharomyces cerevisiae (strain ATCC 204508 / S288c) (Baker's yeast).